A 520-amino-acid polypeptide reads, in one-letter code: Hydroxymethylglutaryl-CoA synthase, cytoplasmic (520 aa).

Ser-4 is subject to Phosphoserine. (3S)-3-hydroxy-3-methylglutaryl-CoA contacts are provided by Asp-43 and Ala-44. 44–46 (AGK) lines the CoA pocket. Lys-46 is subject to N6-acetyllysine. The active-site Proton donor/acceptor is the Glu-95. Residues Cys-129, Asn-167, Thr-171, Ser-221, and His-264 each contribute to the (3S)-3-hydroxy-3-methylglutaryl-CoA site. Cys-129 acts as the Acyl-thioester intermediate in catalysis. Residue Asn-167 coordinates CoA. Ser-221 lines the CoA pocket. His-264 serves as the catalytic Proton donor/acceptor. Residues Lys-269 and Lys-273 each coordinate CoA. Lys-273, Asn-343, and Ser-377 together coordinate (3S)-3-hydroxy-3-methylglutaryl-CoA. Lys-273 carries the N6-acetyllysine modification. Residues 487 to 520 (NTATEHIPSPAKKVPRLPATSGEPESAVISNGEH) form a disordered region. Residues Ser-495 and Ser-516 each carry the phosphoserine modification.

Belongs to the thiolase-like superfamily. HMG-CoA synthase family. As to quaternary structure, homodimer.

The protein localises to the cytoplasm. It catalyses the reaction acetoacetyl-CoA + acetyl-CoA + H2O = (3S)-3-hydroxy-3-methylglutaryl-CoA + CoA + H(+). It participates in metabolic intermediate biosynthesis; (R)-mevalonate biosynthesis; (R)-mevalonate from acetyl-CoA: step 2/3. Catalyzes the condensation of acetyl-CoA with acetoacetyl-CoA to form HMG-CoA, which is converted by HMG-CoA reductase (HMGCR) into mevalonate, a precursor for cholesterol synthesis. In Rattus norvegicus (Rat), this protein is Hydroxymethylglutaryl-CoA synthase, cytoplasmic.